The sequence spans 493 residues: Leucine-rich repeat-containing protein 14 (493 aa).

The stretch at 111-146 (KHALRVLDMTGLLDDGVEQDPGTMSMWDCTAAVART) is one LRR 1; degenerate repeat. An LRR 2; degenerate repeat occupies 194–218 (RLCCRDLRAEDLPMRNTVALLQLLD). The stretch at 219–246 (AGCLRRVDLRFNNLGLRGLSVIIPHVAR) is one LRR 3; degenerate repeat. The LRR 4; degenerate repeat unit spans residues 247–282 (FQHLASLRLHYVHGDSRQPSVDGEDNFRYFLAQMGR). 5 LRR repeats span residues 283 to 307 (FTCL…LSTL), 308 to 339 (QSPL…AHLK), 340 to 360 (KLDL…QGLL), 364 to 391 (AATL…ILTQ), and 392 to 416 (CASL…LLRD).

Belongs to the PRAME family. LRRC14 subfamily. As to quaternary structure, interacts with IKBKB; disrupts IKBKB-IKBKG interaction preventing I-kappa-B-kinase (IKK) core complex formation and leading to a decrease of IKBKB phosphorylation and NF-kappaB activation. Interacts with CHUK.

Its subcellular location is the cytoplasm. Functionally, negatively regulates Toll-like receptor-mediated NF-kappa-B signaling by disrupting IKK core complex formation through interaction with IKBKB. This is Leucine-rich repeat-containing protein 14 from Homo sapiens (Human).